Consider the following 89-residue polypeptide: UPF0223 protein BCB4264_A4064 (89 aa).

The protein belongs to the UPF0223 family.

This is UPF0223 protein BCB4264_A4064 from Bacillus cereus (strain B4264).